The following is a 296-amino-acid chain: Phosphoribosylaminoimidazole-succinocarboxamide synthase (296 aa).

It belongs to the SAICAR synthetase family.

The enzyme catalyses 5-amino-1-(5-phospho-D-ribosyl)imidazole-4-carboxylate + L-aspartate + ATP = (2S)-2-[5-amino-1-(5-phospho-beta-D-ribosyl)imidazole-4-carboxamido]succinate + ADP + phosphate + 2 H(+). The protein operates within purine metabolism; IMP biosynthesis via de novo pathway; 5-amino-1-(5-phospho-D-ribosyl)imidazole-4-carboxamide from 5-amino-1-(5-phospho-D-ribosyl)imidazole-4-carboxylate: step 1/2. In Geobacter sp. (strain M21), this protein is Phosphoribosylaminoimidazole-succinocarboxamide synthase.